The chain runs to 505 residues: Maturase K (505 aa).

The protein belongs to the intron maturase 2 family. MatK subfamily.

The protein localises to the plastid. The protein resides in the chloroplast. In terms of biological role, usually encoded in the trnK tRNA gene intron. Probably assists in splicing its own and other chloroplast group II introns. This chain is Maturase K, found in Micranthes integrifolia (Wholeleaf saxifrage).